Reading from the N-terminus, the 621-residue chain is MRIKVLNPEVVMKIAAGEVVSGPSSVVKELVENSLDAQADSITVEILDGGKSLIKVDDNGIGMEEEELELSILPHTTSKIFSIEDLYKLKTFGFRGEALSSISRVSRMKMTSKPPEKEVGTMLEILGGKIIEKKRVNSSNGTKIEIMDLFFNIPARRKFLKSDSAEGRYVTEIIEKFAFTNNINLTYIRDHKEIYKFSSDMDLITKCLKIYPELKRDDLIEIEHNDSLCKISGVISQPKVGRNNRTAQHFFVNNRYIKVASLYSVLETGYGEILEKSIHPYGIIFIEIPPDMVDVNVHPQKLEVKFTDEQMVASLLKKVVRESLKKNTHFTMEFINSNDTIDLNKKTSSFSVQNLYNKNESSQKVDFSQNPTNTDYFENTDEFFNNSEIEDLQEEQNHFDNSYKLYEPSKTFDFKGFEYQKNQTFTPVEKINSLEKLRILGIVAERYLVVEGEDKLLLVDFHAAHERYIYEILRENVYEKGGLTSDLLLTPVIIALDEVRKGIILENKDHLEKLGIKLEEDEKEIIVKGLPSLVKIDDAERLIFEIADDLRISNFDQQPNILDKNLATMACRAAVKTRDNPTGMETLLNTIFEKKLLTCPHGRPIMIQITFKTLDKYFGRI.

Belongs to the DNA mismatch repair MutL/HexB family.

Functionally, this protein is involved in the repair of mismatches in DNA. It is required for dam-dependent methyl-directed DNA mismatch repair. May act as a 'molecular matchmaker', a protein that promotes the formation of a stable complex between two or more DNA-binding proteins in an ATP-dependent manner without itself being part of a final effector complex. The protein is DNA mismatch repair protein MutL of Petrotoga mobilis (strain DSM 10674 / SJ95).